The primary structure comprises 4924 residues: Hydroxamate-type ferrichrome siderophore peptide synthetase (4924 aa).

Carrier domains follow at residues 715 to 791, 2172 to 2246, 3254 to 3328, and 4402 to 4478; these read NQSE…ILLK, DGFQ…KRRR, NVVE…NTQT, and IHLN…QYEK. S752, S2206, S3288, and S4439 each carry O-(pantetheine 4'-phosphoryl)serine.

Belongs to the ATP-dependent AMP-binding enzyme family.

Its subcellular location is the cytoplasm. Involved in intracellular and extracellular ferrichrome siderophore biosynthesis. This chain is Hydroxamate-type ferrichrome siderophore peptide synthetase (sib1), found in Schizosaccharomyces pombe (strain 972 / ATCC 24843) (Fission yeast).